The following is a 386-amino-acid chain: Succinate--CoA ligase [ADP-forming] subunit beta (386 aa).

The ATP-grasp domain occupies 9–244 (KEVLRKYGVA…LDEEDPKEIE (236 aa)). Residues lysine 46, 53–55 (GRG), glutamate 99, cysteine 102, and glutamate 107 each bind ATP. Residues asparagine 199 and aspartate 213 each contribute to the Mg(2+) site. Substrate is bound by residues asparagine 264 and 321 to 323 (GIM).

It belongs to the succinate/malate CoA ligase beta subunit family. In terms of assembly, heterotetramer of two alpha and two beta subunits. Mg(2+) serves as cofactor.

It carries out the reaction succinate + ATP + CoA = succinyl-CoA + ADP + phosphate. The enzyme catalyses GTP + succinate + CoA = succinyl-CoA + GDP + phosphate. The protein operates within carbohydrate metabolism; tricarboxylic acid cycle; succinate from succinyl-CoA (ligase route): step 1/1. In terms of biological role, succinyl-CoA synthetase functions in the citric acid cycle (TCA), coupling the hydrolysis of succinyl-CoA to the synthesis of either ATP or GTP and thus represents the only step of substrate-level phosphorylation in the TCA. The beta subunit provides nucleotide specificity of the enzyme and binds the substrate succinate, while the binding sites for coenzyme A and phosphate are found in the alpha subunit. This Bacillus licheniformis (strain ATCC 14580 / DSM 13 / JCM 2505 / CCUG 7422 / NBRC 12200 / NCIMB 9375 / NCTC 10341 / NRRL NRS-1264 / Gibson 46) protein is Succinate--CoA ligase [ADP-forming] subunit beta.